The sequence spans 396 residues: NADH-quinone oxidoreductase subunit D (396 aa).

It belongs to the complex I 49 kDa subunit family. In terms of assembly, NDH-1 is composed of 14 different subunits. Subunits NuoB, C, D, E, F, and G constitute the peripheral sector of the complex.

The protein resides in the cell inner membrane. It catalyses the reaction a quinone + NADH + 5 H(+)(in) = a quinol + NAD(+) + 4 H(+)(out). Functionally, NDH-1 shuttles electrons from NADH, via FMN and iron-sulfur (Fe-S) centers, to quinones in the respiratory chain. The immediate electron acceptor for the enzyme in this species is believed to be ubiquinone. Couples the redox reaction to proton translocation (for every two electrons transferred, four hydrogen ions are translocated across the cytoplasmic membrane), and thus conserves the redox energy in a proton gradient. The protein is NADH-quinone oxidoreductase subunit D of Methylorubrum populi (strain ATCC BAA-705 / NCIMB 13946 / BJ001) (Methylobacterium populi).